Consider the following 283-residue polypeptide: MNTLKFTKMHGLGNDFMVIDAVSQDFTPEDAPIAAWADRFRGVGFDQLLVVGRSETEGVDFRYRIFNADGSEVGQCGNGARCFARFVADKGLTDKKEICVETANGVIFPKLSDNGMVTVNMGKPRFMPSEIPFVPESGEGDDACIYGVHLESGIQPVSCVNMGNPHAVIVVDDVECAQVRETGSLIEPHRQFPERVNVGFMQIVSRTAIRLRVFERGVGETQACGTGACAAVVAGIRLGLLDEGKTVEVILPGGTLYIEWACGGDVMMTGPAETVFEGELAYS.

Positions 14, 47, and 67 each coordinate substrate. Cys76 acts as the Proton donor in catalysis. Residues 77–78 (GN), Asn164, Asn197, and 215–216 (ER) each bind substrate. Cys224 acts as the Proton acceptor in catalysis. 225–226 (GT) contributes to the substrate binding site.

Belongs to the diaminopimelate epimerase family. As to quaternary structure, homodimer.

It is found in the cytoplasm. It carries out the reaction (2S,6S)-2,6-diaminopimelate = meso-2,6-diaminopimelate. Its pathway is amino-acid biosynthesis; L-lysine biosynthesis via DAP pathway; DL-2,6-diaminopimelate from LL-2,6-diaminopimelate: step 1/1. Functionally, catalyzes the stereoinversion of LL-2,6-diaminopimelate (L,L-DAP) to meso-diaminopimelate (meso-DAP), a precursor of L-lysine and an essential component of the bacterial peptidoglycan. The protein is Diaminopimelate epimerase of Neisseria meningitidis serogroup A / serotype 4A (strain DSM 15465 / Z2491).